Consider the following 166-residue polypeptide: Coiled-coil domain-containing protein 12 (166 aa).

At Met-1 the chain carries N-acetylmethionine. The stretch at 8 to 28 (VGRLEEEALRRKERLKALREK) forms a coiled coil. The span at 21 to 53 (RLKALREKTGRKDREDGEPQTKQLREEGEEVGK) shows a compositional bias: basic and acidic residues. Residues 21–55 (RLKALREKTGRKDREDGEPQTKQLREEGEEVGKHR) form a disordered region. Lys-53 bears the N6-acetyllysine mark. Residue Lys-94 forms a Glycyl lysine isopeptide (Lys-Gly) (interchain with G-Cter in SUMO2) linkage. Residues 115–144 (DLKRDVAKKLEKLEKRTQRAIAELIRERLK) adopt a coiled-coil conformation. Residues 146–166 (QEDSLASAVDATTGQEACDSD) form a disordered region. A phosphoserine mark is found at Ser-149 and Ser-165.

The sequence is that of Coiled-coil domain-containing protein 12 (Ccdc12) from Mus musculus (Mouse).